The primary structure comprises 294 residues: Tryptophan 2,3-dioxygenase 1 (294 aa).

The disordered stretch occupies residues 1–20 (MSEPIQPTRPAASGCPMHGA). Residues 63–67 (FIVQH), Y125, and R129 each bind substrate. Residue H252 participates in heme binding. T266 is a binding site for substrate.

The protein belongs to the tryptophan 2,3-dioxygenase family. In terms of assembly, homotetramer. It depends on heme as a cofactor.

The enzyme catalyses L-tryptophan + O2 = N-formyl-L-kynurenine. It participates in amino-acid degradation; L-tryptophan degradation via kynurenine pathway; L-kynurenine from L-tryptophan: step 1/2. Heme-dependent dioxygenase that catalyzes the oxidative cleavage of the L-tryptophan (L-Trp) pyrrole ring and converts L-tryptophan to N-formyl-L-kynurenine. Catalyzes the oxidative cleavage of the indole moiety. The protein is Tryptophan 2,3-dioxygenase 1 of Ralstonia nicotianae (strain ATCC BAA-1114 / GMI1000) (Ralstonia solanacearum).